Here is a 226-residue protein sequence, read N- to C-terminus: 7-cyano-7-deazaguanine synthase (226 aa).

7 to 17 is a binding site for ATP; the sequence is ISGGMDSLVTT. Zn(2+) contacts are provided by cysteine 187, cysteine 195, cysteine 198, and cysteine 201.

The protein belongs to the QueC family. Requires Zn(2+) as cofactor.

It catalyses the reaction 7-carboxy-7-deazaguanine + NH4(+) + ATP = 7-cyano-7-deazaguanine + ADP + phosphate + H2O + H(+). It participates in purine metabolism; 7-cyano-7-deazaguanine biosynthesis. Its function is as follows. Catalyzes the ATP-dependent conversion of 7-carboxy-7-deazaguanine (CDG) to 7-cyano-7-deazaguanine (preQ(0)). The protein is 7-cyano-7-deazaguanine synthase of Chlorobium limicola (strain DSM 245 / NBRC 103803 / 6330).